We begin with the raw amino-acid sequence, 539 residues long: Effector protein hopAB1 (539 aa).

4 disordered regions span residues 1–93 (MPGI…PEAQ), 163–220 (QTVR…RHPQ), 230–249 (ASAARHNHSANQTNEALRRL), and 315–336 (RQTTTNSPELPPLASSAESGRR). Over residues 18–31 (TDGEPVTEREHDSS) the composition is skewed to basic and acidic residues. A compositionally biased stretch (low complexity) spans 181 to 194 (SSSGSSQRSLIGRS).

The protein belongs to the HopAB family.

The protein localises to the secreted. Effector protein that plays different roles depending on the species and plant cultivars that interact with the pathogen. Acts as a virulence determinant by enhancing the development of disease symptoms and bacterial growth. Acts as an avirulence factor by eliciting hypersensitive response (HR) and plant resistance. This chain is Effector protein hopAB1 (hopAB1), found in Pseudomonas savastanoi pv. phaseolicola (strain 1448A / Race 6) (Pseudomonas syringae pv. phaseolicola (strain 1448A / Race 6)).